Consider the following 333-residue polypeptide: GDP-mannose transporter GONST1 (333 aa).

The next 9 helical transmembrane spans lie at 33–55 (ALLS…KFVL), 62–84 (AGIF…LSLM), 99–121 (VWFP…LKYI), 153–170 (VWAA…GGIT), 174–196 (FNAV…SLTL), 216–238 (SMVL…FFNE), 253–275 (FWMV…MWFL), 282–304 (TYSL…LFNV), and 308–325 (LQNS…VVFA).

This sequence belongs to the nucleotide-sugar transporter family. GDP-Mannose:GMP antiporter (GMA) (TC 2.A.7.13) subfamily.

It is found in the golgi apparatus membrane. In terms of biological role, involved in the import of GDP-mannose from the cytoplasm into the Golgi lumen. Required for the luminal synthesis of a variety of plant cell surface components. Is required for the correct mannosylation of the glycosylinositol phosphoceramides (GIPC). Can indifferently transport GDP-mannose, GDP-Glucose, GDP-Fucose or GDP-Galactose in vitro. This Arabidopsis thaliana (Mouse-ear cress) protein is GDP-mannose transporter GONST1.